We begin with the raw amino-acid sequence, 270 residues long: Putative pyruvate, phosphate dikinase regulatory protein (270 aa).

148 to 155 provides a ligand contact to ADP; sequence GISRTSKT.

Belongs to the pyruvate, phosphate/water dikinase regulatory protein family. PDRP subfamily.

It catalyses the reaction N(tele)-phospho-L-histidyl/L-threonyl-[pyruvate, phosphate dikinase] + ADP = N(tele)-phospho-L-histidyl/O-phospho-L-threonyl-[pyruvate, phosphate dikinase] + AMP + H(+). The enzyme catalyses N(tele)-phospho-L-histidyl/O-phospho-L-threonyl-[pyruvate, phosphate dikinase] + phosphate + H(+) = N(tele)-phospho-L-histidyl/L-threonyl-[pyruvate, phosphate dikinase] + diphosphate. Functionally, bifunctional serine/threonine kinase and phosphorylase involved in the regulation of the pyruvate, phosphate dikinase (PPDK) by catalyzing its phosphorylation/dephosphorylation. The polypeptide is Putative pyruvate, phosphate dikinase regulatory protein (Bacillus cereus (strain 03BB102)).